Consider the following 466-residue polypeptide: RUS family member 1 (466 aa).

Ala2 carries the post-translational modification N-acetylalanine. A helical membrane pass occupies residues Leu245–Leu265.

It belongs to the RUS1 family.

The protein localises to the membrane. The chain is RUS family member 1 (Rusf1) from Rattus norvegicus (Rat).